The sequence spans 481 residues: Aspartyl/glutamyl-tRNA(Asn/Gln) amidotransferase subunit B (481 aa).

This sequence belongs to the GatB/GatE family. GatB subfamily. Heterotrimer of A, B and C subunits.

The enzyme catalyses L-glutamyl-tRNA(Gln) + L-glutamine + ATP + H2O = L-glutaminyl-tRNA(Gln) + L-glutamate + ADP + phosphate + H(+). It catalyses the reaction L-aspartyl-tRNA(Asn) + L-glutamine + ATP + H2O = L-asparaginyl-tRNA(Asn) + L-glutamate + ADP + phosphate + 2 H(+). Its function is as follows. Allows the formation of correctly charged Asn-tRNA(Asn) or Gln-tRNA(Gln) through the transamidation of misacylated Asp-tRNA(Asn) or Glu-tRNA(Gln) in organisms which lack either or both of asparaginyl-tRNA or glutaminyl-tRNA synthetases. The reaction takes place in the presence of glutamine and ATP through an activated phospho-Asp-tRNA(Asn) or phospho-Glu-tRNA(Gln). This chain is Aspartyl/glutamyl-tRNA(Asn/Gln) amidotransferase subunit B, found in Pseudomonas syringae pv. tomato (strain ATCC BAA-871 / DC3000).